A 2210-amino-acid chain; its full sequence is RNA-directed RNA polymerase L (2210 aa).

Positions 26-285 are endonuclease; that stretch reads KAIFLSQTKL…KCAIMSEEDS (260 aa). Positions 51, 88, and 101 each coordinate Mn(2+). Lysine 114 is a catalytic residue. The region spanning 1163–1359 is the RdRp catalytic domain; that stretch reads LDMKSVVRQG…FLSDKLNKFV (197 aa). Aspartate 1319 serves as a coordination point for Mg(2+).

It belongs to the Bunyavirales RNA polymerase family. In terms of assembly, homomultimer; the oligomeric structure is essential for the polymerase activity. Interacts with nucleoprotein N. Interacts with protein Z; this interaction inhibits viral transcription and replication, Z partially blocks the product exit tunnel for the releasing nascent RNA product. The cofactor is Mn(2+). Mg(2+) is required as a cofactor.

It localises to the virion. It is found in the host cytoplasm. It carries out the reaction RNA(n) + a ribonucleoside 5'-triphosphate = RNA(n+1) + diphosphate. RNA-dependent RNA polymerase, which is responsible for the replication and transcription of the viral RNA genome using antigenomic RNA as an intermediate. During transcription, synthesizes subgenomic RNAs and assures their capping by a cap-snatching mechanism, which involves the endonuclease activity cleaving the host capped pre-mRNAs. These short capped RNAs are then used as primers for viral transcription. The 3'-end of subgenomic mRNAs molecules are heterogeneous and not polyadenylated. The replicase function is to direct synthesis of antigenomic and genomic RNA which are encapsidated and non capped. As a consequence of the use of the same enzyme for both transcription and replication, these mechanisms need to be well coordinated. These processes may be regulated by proteins N and Z in a dose-dependent manner. Z protein inhibits the viral polymerase L und thus the viral transcription and RNA synthesis. In Sigmodon alstoni (PIRV), this protein is RNA-directed RNA polymerase L.